The chain runs to 338 residues: Anthranilate phosphoribosyltransferase (338 aa).

5-phospho-alpha-D-ribose 1-diphosphate-binding positions include G80, 83 to 84 (GD), T88, 90 to 93 (NIST), 108 to 116 (KHGNRSVSS), and S120. G80 is a binding site for anthranilate. Residue S92 coordinates Mg(2+). N111 contacts anthranilate. R166 lines the anthranilate pocket. Mg(2+) contacts are provided by D225 and E226.

It belongs to the anthranilate phosphoribosyltransferase family. As to quaternary structure, homodimer. Mg(2+) serves as cofactor.

The enzyme catalyses N-(5-phospho-beta-D-ribosyl)anthranilate + diphosphate = 5-phospho-alpha-D-ribose 1-diphosphate + anthranilate. It participates in amino-acid biosynthesis; L-tryptophan biosynthesis; L-tryptophan from chorismate: step 2/5. In terms of biological role, catalyzes the transfer of the phosphoribosyl group of 5-phosphorylribose-1-pyrophosphate (PRPP) to anthranilate to yield N-(5'-phosphoribosyl)-anthranilate (PRA). This is Anthranilate phosphoribosyltransferase from Desulfatibacillum aliphaticivorans.